A 667-amino-acid polypeptide reads, in one-letter code: Ribosomal oxygenase 1 (667 aa).

N-acetylmethionine is present on Met1. Low complexity predominate over residues Met1–Leu11. Residues Met1–Leu99 form a disordered region. Basic residues-rich tracts occupy residues Arg12 to Gln22 and Arg35 to Arg44. 3 positions are modified to phosphoserine: Ser61, Ser64, and Ser108. The JmjC domain maps to Cys322–Ala467. Positions 368, 370, and 433 each coordinate Fe cation.

The protein belongs to the ROX family. NO66 subfamily. Interacts with SP7/OSX; the interaction is direct. Interacts with MYC. Interacts with PHF19; leading to its recruitment to H3K36me3 sites. Fe(2+) serves as cofactor.

It localises to the nucleus. Its subcellular location is the nucleolus. The protein resides in the nucleoplasm. The catalysed reaction is N(6),N(6)-dimethyl-L-lysyl(36)-[histone H3] + 2 2-oxoglutarate + 2 O2 = L-lysyl(36)-[histone H3] + 2 formaldehyde + 2 succinate + 2 CO2. It carries out the reaction N(6)-methyl-L-lysyl-[protein] + 2-oxoglutarate + O2 = L-lysyl-[protein] + formaldehyde + succinate + CO2. The enzyme catalyses L-histidyl-[protein] + 2-oxoglutarate + O2 = (3S)-3-hydroxy-L-histidyl-[protein] + succinate + CO2. Functionally, oxygenase that can act as both a histone lysine demethylase and a ribosomal histidine hydroxylase. Specifically demethylates 'Lys-4' (H3K4me) and 'Lys-36' (H3K36me) of histone H3, thereby playing a central role in histone code. Preferentially demethylates trimethylated H3 'Lys-4' (H3K4me3) and monomethylated H3 'Lys-4' (H3K4me1) residues, while it has weaker activity for dimethylated H3 'Lys-36' (H3K36me2). Acts as a regulator of osteoblast differentiation via its interaction with SP7/OSX by demethylating H3K4me and H3K36me, thereby inhibiting SP7/OSX-mediated promoter activation. Also catalyzes demethylation of non-histone proteins, such as CGAS: demethylation of monomethylated CGAS promotes interaction between CGAS and PARP1, followed by PARP1 inactivation. Also catalyzes the hydroxylation of 60S ribosomal protein L8 on 'His-216', thereby playing a role in ribosome biogenesis. Participates in MYC-induced transcriptional activation. The protein is Ribosomal oxygenase 1 (RIOX1) of Bos taurus (Bovine).